A 334-amino-acid polypeptide reads, in one-letter code: tRNA N6-adenosine threonylcarbamoyltransferase (334 aa).

Positions 111 and 115 each coordinate Fe cation. Substrate is bound by residues 134 to 138 (IVSGG), aspartate 167, glycine 180, aspartate 184, and asparagine 272. Fe cation is bound at residue aspartate 300.

This sequence belongs to the KAE1 / TsaD family. Requires Fe(2+) as cofactor.

The protein localises to the cytoplasm. The catalysed reaction is L-threonylcarbamoyladenylate + adenosine(37) in tRNA = N(6)-L-threonylcarbamoyladenosine(37) in tRNA + AMP + H(+). Required for the formation of a threonylcarbamoyl group on adenosine at position 37 (t(6)A37) in tRNAs that read codons beginning with adenine. Is involved in the transfer of the threonylcarbamoyl moiety of threonylcarbamoyl-AMP (TC-AMP) to the N6 group of A37, together with TsaE and TsaB. TsaD likely plays a direct catalytic role in this reaction. This Dictyoglomus turgidum (strain DSM 6724 / Z-1310) protein is tRNA N6-adenosine threonylcarbamoyltransferase.